Reading from the N-terminus, the 131-residue chain is Small ribosomal subunit protein uS8 (131 aa).

It belongs to the universal ribosomal protein uS8 family. As to quaternary structure, part of the 30S ribosomal subunit. Contacts proteins S5 and S12.

One of the primary rRNA binding proteins, it binds directly to 16S rRNA central domain where it helps coordinate assembly of the platform of the 30S subunit. The sequence is that of Small ribosomal subunit protein uS8 from Paracidovorax citrulli (strain AAC00-1) (Acidovorax citrulli).